The chain runs to 83 residues: Small ribosomal subunit protein eS21 (83 aa).

This sequence belongs to the eukaryotic ribosomal protein eS21 family. In terms of assembly, component of the 40S small ribosomal subunit.

The protein localises to the cytoplasm. Its subcellular location is the cytosol. It localises to the rough endoplasmic reticulum. Its function is as follows. Component of the small ribosomal subunit. The ribosome is a large ribonucleoprotein complex responsible for the synthesis of proteins in the cell. In Xenopus laevis (African clawed frog), this protein is Small ribosomal subunit protein eS21 (rps21).